A 199-amino-acid chain; its full sequence is Segregation and condensation protein B (199 aa).

This sequence belongs to the ScpB family. As to quaternary structure, homodimer. Homodimerization may be required to stabilize the binding of ScpA to the Smc head domains. Component of a cohesin-like complex composed of ScpA, ScpB and the Smc homodimer, in which ScpA and ScpB bind to the head domain of Smc. The presence of the three proteins is required for the association of the complex with DNA.

The protein resides in the cytoplasm. In terms of biological role, participates in chromosomal partition during cell division. May act via the formation of a condensin-like complex containing Smc and ScpA that pull DNA away from mid-cell into both cell halves. The protein is Segregation and condensation protein B of Leuconostoc mesenteroides subsp. mesenteroides (strain ATCC 8293 / DSM 20343 / BCRC 11652 / CCM 1803 / JCM 6124 / NCDO 523 / NBRC 100496 / NCIMB 8023 / NCTC 12954 / NRRL B-1118 / 37Y).